The sequence spans 251 residues: Imidazole glycerol phosphate synthase subunit HisF (251 aa).

Catalysis depends on residues D11 and D130.

Belongs to the HisA/HisF family. As to quaternary structure, heterodimer of HisH and HisF.

It localises to the cytoplasm. It catalyses the reaction 5-[(5-phospho-1-deoxy-D-ribulos-1-ylimino)methylamino]-1-(5-phospho-beta-D-ribosyl)imidazole-4-carboxamide + L-glutamine = D-erythro-1-(imidazol-4-yl)glycerol 3-phosphate + 5-amino-1-(5-phospho-beta-D-ribosyl)imidazole-4-carboxamide + L-glutamate + H(+). It functions in the pathway amino-acid biosynthesis; L-histidine biosynthesis; L-histidine from 5-phospho-alpha-D-ribose 1-diphosphate: step 5/9. Functionally, IGPS catalyzes the conversion of PRFAR and glutamine to IGP, AICAR and glutamate. The HisF subunit catalyzes the cyclization activity that produces IGP and AICAR from PRFAR using the ammonia provided by the HisH subunit. This Chlorobium phaeobacteroides (strain DSM 266 / SMG 266 / 2430) protein is Imidazole glycerol phosphate synthase subunit HisF.